The following is a 339-amino-acid chain: Anthranilate phosphoribosyltransferase (339 aa).

5-phospho-alpha-D-ribose 1-diphosphate-binding positions include glycine 81, 84-85 (GD), threonine 89, 91-94 (NVST), 109-117 (KHGNRSVSS), and serine 121. Residue glycine 81 coordinates anthranilate. Position 93 (serine 93) interacts with Mg(2+). Asparagine 112 serves as a coordination point for anthranilate. Arginine 167 is a binding site for anthranilate. Mg(2+)-binding residues include aspartate 226 and glutamate 227.

It belongs to the anthranilate phosphoribosyltransferase family. Homodimer. Mg(2+) serves as cofactor.

The enzyme catalyses N-(5-phospho-beta-D-ribosyl)anthranilate + diphosphate = 5-phospho-alpha-D-ribose 1-diphosphate + anthranilate. It participates in amino-acid biosynthesis; L-tryptophan biosynthesis; L-tryptophan from chorismate: step 2/5. Catalyzes the transfer of the phosphoribosyl group of 5-phosphorylribose-1-pyrophosphate (PRPP) to anthranilate to yield N-(5'-phosphoribosyl)-anthranilate (PRA). The chain is Anthranilate phosphoribosyltransferase from Persephonella marina (strain DSM 14350 / EX-H1).